The chain runs to 508 residues: Glycerol kinase (508 aa).

Thr15 lines the ADP pocket. 3 residues coordinate ATP: Thr15, Ser16, and Ser17. Residue Thr15 coordinates sn-glycerol 3-phosphate. Position 19 (Arg19) interacts with ADP. Sn-glycerol 3-phosphate is bound by residues Arg85, Glu86, Tyr138, and Asp251. 5 residues coordinate glycerol: Arg85, Glu86, Tyr138, Asp251, and Gln252. Thr273, Gly317, and Gly419 together coordinate ADP. ATP contacts are provided by Thr273, Gly317, and Gly419.

This sequence belongs to the FGGY kinase family.

It carries out the reaction glycerol + ATP = sn-glycerol 3-phosphate + ADP + H(+). It participates in polyol metabolism; glycerol degradation via glycerol kinase pathway; sn-glycerol 3-phosphate from glycerol: step 1/1. Inhibited by fructose 1,6-bisphosphate (FBP). In terms of biological role, key enzyme in the regulation of glycerol uptake and metabolism. Catalyzes the phosphorylation of glycerol to yield sn-glycerol 3-phosphate. In Mycoplasma genitalium (strain ATCC 33530 / DSM 19775 / NCTC 10195 / G37) (Mycoplasmoides genitalium), this protein is Glycerol kinase.